Consider the following 448-residue polypeptide: Methylenetetrahydrofolate--tRNA-(uracil-5-)-methyltransferase TrmFO (448 aa).

10–15 (GAGLAG) contributes to the FAD binding site.

It belongs to the MnmG family. TrmFO subfamily. FAD serves as cofactor.

The protein resides in the cytoplasm. The enzyme catalyses uridine(54) in tRNA + (6R)-5,10-methylene-5,6,7,8-tetrahydrofolate + NADH + H(+) = 5-methyluridine(54) in tRNA + (6S)-5,6,7,8-tetrahydrofolate + NAD(+). It carries out the reaction uridine(54) in tRNA + (6R)-5,10-methylene-5,6,7,8-tetrahydrofolate + NADPH + H(+) = 5-methyluridine(54) in tRNA + (6S)-5,6,7,8-tetrahydrofolate + NADP(+). In terms of biological role, catalyzes the folate-dependent formation of 5-methyl-uridine at position 54 (M-5-U54) in all tRNAs. The protein is Methylenetetrahydrofolate--tRNA-(uracil-5-)-methyltransferase TrmFO of Lactococcus lactis subsp. cremoris (strain SK11).